We begin with the raw amino-acid sequence, 530 residues long: Phosphoenolpyruvate carboxykinase (ATP) (530 aa).

Substrate contacts are provided by R58, Y195, and K201. ATP contacts are provided by residues K201, H220, and 236-244 (GLSGTGKTT). Mn(2+)-binding residues include K201 and H220. D257 is a binding site for Mn(2+). Residues E285, R321, 440-441 (RI), and T446 contribute to the ATP site. R321 contacts substrate.

The protein belongs to the phosphoenolpyruvate carboxykinase (ATP) family. Mn(2+) serves as cofactor.

It is found in the cytoplasm. The catalysed reaction is oxaloacetate + ATP = phosphoenolpyruvate + ADP + CO2. Its pathway is carbohydrate biosynthesis; gluconeogenesis. In terms of biological role, involved in the gluconeogenesis. Catalyzes the conversion of oxaloacetate (OAA) to phosphoenolpyruvate (PEP) through direct phosphoryl transfer between the nucleoside triphosphate and OAA. In Staphylococcus haemolyticus (strain JCSC1435), this protein is Phosphoenolpyruvate carboxykinase (ATP).